The following is a 126-amino-acid chain: MHAIMLKAKLHRAEVTHAVLDYEGSCAIDGEWLDLSGIREYEQIQIYNVDNGERFTTYAIRGEEGSRMISVNGAAAHKAKVGDRVIICAYAHYSEAELVNFKPRMLYMAPGNELSRASNAIPVQLA.

Ser25 (schiff-base intermediate with substrate; via pyruvic acid) is an active-site residue. Ser25 is modified (pyruvic acid (Ser)). Substrate is bound at residue Thr57. The active-site Proton donor is the Tyr58. 73-75 lines the substrate pocket; that stretch reads GAA.

It belongs to the PanD family. In terms of assembly, heterooctamer of four alpha and four beta subunits. The cofactor is pyruvate. Is synthesized initially as an inactive proenzyme, which is activated by self-cleavage at a specific serine bond to produce a beta-subunit with a hydroxyl group at its C-terminus and an alpha-subunit with a pyruvoyl group at its N-terminus.

It is found in the cytoplasm. The catalysed reaction is L-aspartate + H(+) = beta-alanine + CO2. The protein operates within cofactor biosynthesis; (R)-pantothenate biosynthesis; beta-alanine from L-aspartate: step 1/1. Functionally, catalyzes the pyruvoyl-dependent decarboxylation of aspartate to produce beta-alanine. This Pseudomonas fluorescens protein is Aspartate 1-decarboxylase.